Consider the following 382-residue polypeptide: ATP phosphoribosyltransferase regulatory subunit (382 aa).

This sequence belongs to the class-II aminoacyl-tRNA synthetase family. HisZ subfamily. In terms of assembly, heteromultimer composed of HisG and HisZ subunits.

It localises to the cytoplasm. The protein operates within amino-acid biosynthesis; L-histidine biosynthesis; L-histidine from 5-phospho-alpha-D-ribose 1-diphosphate: step 1/9. Required for the first step of histidine biosynthesis. May allow the feedback regulation of ATP phosphoribosyltransferase activity by histidine. The protein is ATP phosphoribosyltransferase regulatory subunit of Verminephrobacter eiseniae (strain EF01-2).